Reading from the N-terminus, the 1643-residue chain is MHRAVDPPGARAAREAFALGGLSCAGAWSSCPPHPPPRSAWLPGGRCSASIGQPPLPAPLPPSHGSSSGHPSKPYYAPGAPTPRPLHGKLESLHGCVQALLREPAQPGLWEQLGQLYESEHDSEEATRCYHSALRYGGSFAELGPRIGRLQQAQLWNFHTGSCQHRAKVLPPLEQVWNLLHLEHKRNYGAKRGGPPVKRAAEPPVVQPVPPAALSGPSGEEGLSPGGKRRRGCNSEQTGLPPGLPLPPPPLPPPPPPPPPPPPPLPGLATSPPFQLTKPGLWSTLHGDAWGPERKGSAPPERQEQRHSLPHPYPYPAPAYTAHPPGHRLVPAAPPGPGPRPPGAESHGCLPATRPPGSDLRESRVQRSRMDSSVSPAATTACVPYAPSRPPGLPGTTTSSSSSSSSNTGLRGVEPNPGIPGADHYQTPALEVSHHGRLGPSAHSSRKPFLGAPAATPHLSLPPGPSSPPPPPCPRLLRPPPPPAWLKGPACRAAREDGEILEELFFGTEGPPRPAPPPLPHREGFLGPPASRFSVGTQDSHTPPTPPTPTTSSSNSNSGSHSSSPAGPVSFPPPPYLARSIDPLPRPPSPAQNPQDPPLVPLTLALPPAPPSSCHQNTSGSFRRPESPRPRVSFPKTPEVGPGPPPGPLSKAPQPVPPGVGELPARGPRLFDFPPTPLEDQFEEPAEFKILPDGLANIMKMLDESIRKEEEQQQHEAGVAPQPPLKEPFASLQSPFPTDTAPTTTAPAVAVTTTTTTTTTTTATQEEEKKPPPALPPPPPLAKFPPPSQPQPPPPPPPSPASLLKSLASVLEGQKYCYRGTGAAVSTRPGPLPTTQYSPGPPSGATALPPTSAAPSAQGSPQPSASSSSQFSTSGGPWARERRAGEEPVPGPMTPTQPPPPLSLPPARSESEVLEEISRACETLVERVGRSATDPADPVDTAEPADSGTERLLPPAQAKEEAGGVAAVSGSCKRRQKEHQKEHRRHRRACKDSVGRRPREGRAKAKAKVPKEKSRRVLGNLDLQSEEIQGREKSRPDLGGASKAKPPTAPAPPSAPAPSAQPTPPSASVPGKKAREEAPGPPGVSRADMLKLRSLSEGPPKELKIRLIKVESGDKETFIASEVEERRLRMADLTISHCAADVVRASRNAKVKGKFRESYLSPAQSVKPKINTEEKLPREKLNPPTPSIYLESKRDAFSPVLLQFCTDPRNPITVIRGLAGSLRLNLGLFSTKTLVEASGEHTVEVRTQVQQPSDENWDLTGTRQIWPCESSRSHTTIAKYAQYQASSFQESLQEEKESEDEESEEPDSTTGTPPSSAPDPKNHHIIKFGTNIDLSDAKRWKPQLQELLKLPAFMRVTSTGNMLSHVGHTILGMNTVQLYMKVPGSRTPGHQENNNFCSVNINIGPGDCEWFAVHEHYWETISAFCDRHGVDYLTGSWWPILDDLYASNIPVYRFVQRPGDLVWINAGTVHWVQATGWCNNIAWNVGPLTAYQYQLALERYEWNEVKNVKSIVPMIHVSWNVARTVKISDPDLFKMIKFCLLQSMKHCQVQRESLVRAGKKIAYQGRVKDEPAYYCNECDVEVFNILFVTSENGSRNTYLVHCEGCARRRSAGLQGVVVLEQYRTEELAQAYDAFTLAPASTSR.

Disordered stretches follow at residues 52–88 (GQPPLPAPLPPSHGSSSGHPSKPYYAPGAPTPRPLHG), 190–680 (AKRG…PLED), 704–807 (ESIR…LKSL), and 822–1096 (GAAV…RSLS). 2 stretches are compositionally biased toward low complexity: residues 63–74 (SHGSSSGHPSKP) and 212–223 (AALSGPSGEEGL). Ser224 bears the Phosphoserine mark. Positions 242 to 266 (PGLPLPPPPLPPPPPPPPPPPPPLP) are enriched in pro residues. Basic and acidic residues predominate over residues 291–307 (GPERKGSAPPERQEQRH). Pro residues predominate over residues 332-342 (AAPPGPGPRPP). The segment covering 359–370 (DLRESRVQRSRM) has biased composition (basic and acidic residues). A compositionally biased stretch (low complexity) spans 394–412 (PGTTTSSSSSSSSNTGLRG). Residues 460 to 484 (SLPPGPSSPPPPPCPRLLRPPPPPA) are compositionally biased toward pro residues. Over residues 550–569 (TTSSSNSNSGSHSSSPAGPV) the composition is skewed to low complexity. Composition is skewed to pro residues over residues 584–600 (LPRPPSPAQNPQDPPLV) and 641–658 (GPGPPPGPLSKAPQPVPP). Residues 704 to 714 (ESIRKEEEQQQ) show a composition bias toward basic and acidic residues. Positions 740-764 (TAPTTTAPAVAVTTTTTTTTTTTAT) are enriched in low complexity. Positions 772–800 (PPALPPPPPLAKFPPPSQPQPPPPPPPSP) are enriched in pro residues. Residues 843–877 (SGATALPPTSAAPSAQGSPQPSASSSSQFSTSGGP) are compositionally biased toward low complexity. Residues 889–904 (VPGPMTPTQPPPPLSL) are compositionally biased toward pro residues. The span at 916 to 929 (EISRACETLVERVG) shows a compositional bias: basic and acidic residues. Residues 972–989 (CKRRQKEHQKEHRRHRRA) are compositionally biased toward basic residues. Residues 990–1003 (CKDSVGRRPREGRA) show a composition bias toward basic and acidic residues. The segment covering 1004–1016 (KAKAKVPKEKSRR) has biased composition (basic residues). Residues 1047–1067 (PTAPAPPSAPAPSAQPTPPSA) show a composition bias toward pro residues. A Glycyl lysine isopeptide (Lys-Gly) (interchain with G-Cter in SUMO2) cross-link involves residue Lys1109. Residues 1288–1325 (FQESLQEEKESEDEESEEPDSTTGTPPSSAPDPKNHHI) form a disordered region. Residues 1296 to 1307 (KESEDEESEEPD) show a composition bias toward acidic residues. Positions 1339-1502 (RWKPQLQELL…YQLALERYEW (164 aa)) constitute a JmjC domain. 3 residues coordinate Fe cation: His1390, Glu1392, and His1470. Residues Cys1575, Cys1578, Cys1602, and Cys1605 each contribute to the Zn(2+) site.

This sequence belongs to the UTX family. In terms of assembly, interacts with TLE1. Component of the MLL4 complex, at least composed of KMT2B/MLL4, ASH2L, RBBP5, WDR5, and KDM6B. Interacts with TBX21, SMARCA4, SMARCC1 and SMARCC2. Requires L-ascorbate as cofactor. Fe(2+) is required as a cofactor.

The protein localises to the nucleus. The catalysed reaction is N(6),N(6),N(6)-trimethyl-L-lysyl(27)-[histone H3] + 2 2-oxoglutarate + 2 O2 = N(6)-methyl-L-lysyl(27)-[histone H3] + 2 formaldehyde + 2 succinate + 2 CO2. Functionally, histone demethylase that specifically demethylates 'Lys-27' of histone H3, thereby playing a central role in histone code. Demethylates trimethylated and dimethylated H3 'Lys-27'. Plays a central role in regulation of posterior development, by regulating HOX gene expression. Involved in inflammatory response by participating in macrophage differentiation in case of inflammation by regulating gene expression and macrophage differentiation. Plays a demethylase-independent role in chromatin remodeling to regulate T-box family member-dependent gene expression by acting as a link between T-box factors and the SMARCA4-containing SWI/SNF remodeling complex. In Homo sapiens (Human), this protein is Lysine-specific demethylase 6B (KDM6B).